Reading from the N-terminus, the 106-residue chain is ATP-dependent Clp protease adapter protein ClpS (106 aa).

The protein belongs to the ClpS family. Binds to the N-terminal domain of the chaperone ClpA.

Functionally, involved in the modulation of the specificity of the ClpAP-mediated ATP-dependent protein degradation. This chain is ATP-dependent Clp protease adapter protein ClpS, found in Salmonella agona (strain SL483).